Reading from the N-terminus, the 780-residue chain is Cullin-5 (780 aa).

Ser34 bears the Phosphoserine mark. Thr210 carries the post-translational modification Phosphothreonine. The 60-residue stretch at 713–772 (LRTRKLYIQIMKMRKKISNAQLQTELVEILKNMFLPQKKMIKEQIEWLIEHKYIRRDESD) folds into the Cullin neddylation domain. Lys724 is covalently cross-linked (Glycyl lysine isopeptide (Lys-Gly) (interchain with G-Cter in NEDD8)).

This sequence belongs to the cullin family. As to quaternary structure, component of multiple cullin-5-RING E3 ubiquitin-protein ligase complexes (ECS complexes, also named CRL5 complexes) formed of CUL5, Elongin BC (ELOB and ELOC), RNF7/RBX2 and a variable SOCS box domain-containing protein as substrate-specific recognition component. CUL5-containing ECS complexes specifically contain RNF7/RBX2, and not RBX1, as catalytic subunit. Component of the ECS(ASB2) complex with the substrate recognition component ASB2. Component of the ECS(ASB6) complex with the substrate recognition component ASB6. Component of the ECS(ASB7) complex with the substrate recognition component ASB7. Component of the ECS(ASB9) complex with the substrate recognition component ASB9. Component of the ECS(ASB11) complex with the substrate recognition component ASB11. Component of the ECS(ASB12) complex with the substrate recognition component ASB12. Component of the ECS(LRRC41) complex with the substrate recognition component LRRC41. Component of the ECS(SOCS1) complex with the substrate recognition component SOCS1. Component of the ECS(SOCS2) complex with the substrate recognition component SOCS2. Component of the ECS(WSB1) complex with the substrate recognition subunit WSB1. Component of the ECS(SOCS3) complex with the substrate recognition component SOCS3. Component of the ECS(SOCS7) complex with the substrate recognition component SOCS7. Component of the ECS(SPSB1) complex with the substrate recognition component SPSB1. Component of the ECS(SPSB3) complex with the substrate recognition component SPSB3. Component of the ECS(SPSB2) complex with the substrate recognition component SPSB2. Component of the ECS(SPSB4) complex with the substrate recognition component SPSB4. Component of the ECS(RAB40) complex with the substrate recognition subunit RAB40A, RAB40B or RAB40C. Component of the ECS(KLHDC1) complex with the substrate recognition component KLHDC1. Component of the ECS(PCMTD1) complex with the substrate recognition subunit PCMTD1. May also form complexes containing RBX1 and ELOA or VHL; additional evidence is however required to confirm this result in vivo. Interacts (when neddylated) with ARIH2; leading to activate the E3 ligase activity of ARIH2. Interacts with ERCC6; the interaction is induced by DNA damaging agents or inhibitors of RNA polymerase II elongation. Interacts with ELOA (via the BC-box). Interacts (unneddylated form) with DCUN1D1, DCUN1D2, DCUN1D3, DCUN1D4 and DCUN1D5; these interactions promote the cullin neddylation. Post-translationally, neddylated; which enhances the ubiquitination activity of ECS complexes and prevents binding of the inhibitor CAND1. Deneddylated via its interaction with the COP9 signalosome (CSN). Kidney collecting tubules.

The protein resides in the nucleus. It functions in the pathway protein modification; protein ubiquitination. Its function is as follows. Core component of multiple cullin-5-RING E3 ubiquitin-protein ligase complexes (ECS complexes, also named CRL5 complexes), which mediate the ubiquitination and subsequent proteasomal degradation of target proteins. Acts a scaffold protein that contributes to catalysis through positioning of the substrate and the ubiquitin-conjugating enzyme. The functional specificity of the E3 ubiquitin-protein ligase complex depends on the variable SOCS box-containing substrate recognition component. Acts as a key regulator of neuron positioning during cortex development: component of various SOCS-containing ECS complexes, such as the ECS(SOCS7) complex, that regulate reelin signaling by mediating ubiquitination and degradation of DAB1. ECS(SOCS1) seems to direct ubiquitination of JAK2. The ECS(SOCS2) complex mediates the ubiquitination and subsequent proteasomal degradation of phosphorylated EPOR and GHR. The ECS(SPSB3) complex catalyzes ubiquitination of nuclear CGAS. ECS(KLHDC1) complex is part of the DesCEND (destruction via C-end degrons) pathway and mediates ubiquitination and degradation of truncated SELENOS selenoprotein produced by failed UGA/Sec decoding, which ends with a glycine. The ECS(ASB9) complex mediates ubiquitination and degradation of CKB. As part of some ECS complex, promotes 'Lys-11'-linked ubiquitination and degradation of BTRC. As part of a multisubunit ECS complex, polyubiquitinates monoubiquitinated POLR2A. As part of the ECS(RAB40C) complex, mediates ANKRD28 ubiquitination and degradation, thereby regulating protein phosphatase 6 (PP6) complex activity and focal adhesion assembly during cell migration. As part of the ECS(RAB40A) complex, mediates RHOU 'Lys-48'-linked ubiquitination and degradation, thus inhibiting focal adhesion disassembly during cell migration. As part of the ECS(RAB40B) complex, mediates LIMA1/EPLIN and RAP2 ubiquitination, thereby regulating actin cytoskeleton dynamics and stress fiber formation during cell migration. May form a cell surface vasopressin receptor. The polypeptide is Cullin-5 (CUL5) (Oryctolagus cuniculus (Rabbit)).